A 64-amino-acid polypeptide reads, in one-letter code: Cytochrome c oxidase subunit 5C-2 (64 aa).

Residues 15–34 traverse the membrane as a helical segment; sequence SVVKELIIGLTLGLAAGGLW.

This sequence belongs to the cytochrome c oxidase subunit 5C family.

The protein resides in the mitochondrion inner membrane. Functionally, this protein is one of the nuclear-coded polypeptide chains of cytochrome c oxidase, the terminal oxidase in mitochondrial electron transport. This Arabidopsis thaliana (Mouse-ear cress) protein is Cytochrome c oxidase subunit 5C-2.